The chain runs to 540 residues: Phosphoenolpyruvate carboxykinase (ATP) (540 aa).

R65 provides a ligand contact to substrate. Position 87 is an N6-acetyllysine (K87). Substrate is bound by residues Y207 and K213. Residues K213, H232, and 248 to 256 (GLSGTGKTT) each bind ATP. 2 residues coordinate Mn(2+): K213 and H232. Residue D269 participates in Mn(2+) binding. ATP-binding positions include E297, R333, 449 to 450 (RI), and T455. Position 333 (R333) interacts with substrate. K523 is modified (N6-acetyllysine).

It belongs to the phosphoenolpyruvate carboxykinase (ATP) family. Monomer. Mn(2+) serves as cofactor.

It localises to the cytoplasm. It carries out the reaction oxaloacetate + ATP = phosphoenolpyruvate + ADP + CO2. It functions in the pathway carbohydrate biosynthesis; gluconeogenesis. In terms of biological role, involved in the gluconeogenesis. Catalyzes the conversion of oxaloacetate (OAA) to phosphoenolpyruvate (PEP) through direct phosphoryl transfer between the nucleoside triphosphate and OAA. The polypeptide is Phosphoenolpyruvate carboxykinase (ATP) (Escherichia coli O127:H6 (strain E2348/69 / EPEC)).